The primary structure comprises 290 residues: Nucleotide-binding protein BPP4038 (290 aa).

Residue 9 to 16 (GISGSGKS) participates in ATP binding. Residue 58–61 (DVRS) coordinates GTP.

The protein belongs to the RapZ-like family.

Displays ATPase and GTPase activities. The sequence is that of Nucleotide-binding protein BPP4038 from Bordetella parapertussis (strain 12822 / ATCC BAA-587 / NCTC 13253).